The primary structure comprises 753 residues: 5-methyltetrahydropteroyltriglutamate--homocysteine methyltransferase (753 aa).

5-methyltetrahydropteroyltri-L-glutamate is bound by residues 17-20 (RELK) and Lys-117. L-homocysteine-binding positions include 431 to 433 (IGS) and Glu-484. Residues 431–433 (IGS) and Glu-484 each bind L-methionine. 5-methyltetrahydropteroyltri-L-glutamate-binding positions include 515 to 516 (RC) and Trp-561. Asp-599 lines the L-homocysteine pocket. Position 599 (Asp-599) interacts with L-methionine. Glu-605 is a 5-methyltetrahydropteroyltri-L-glutamate binding site. Positions 641, 643, and 665 each coordinate Zn(2+). His-694 (proton donor) is an active-site residue. Cys-726 contacts Zn(2+).

Belongs to the vitamin-B12 independent methionine synthase family. It depends on Zn(2+) as a cofactor.

The catalysed reaction is 5-methyltetrahydropteroyltri-L-glutamate + L-homocysteine = tetrahydropteroyltri-L-glutamate + L-methionine. It participates in amino-acid biosynthesis; L-methionine biosynthesis via de novo pathway; L-methionine from L-homocysteine (MetE route): step 1/1. Catalyzes the transfer of a methyl group from 5-methyltetrahydrofolate to homocysteine resulting in methionine formation. This Escherichia coli (strain SMS-3-5 / SECEC) protein is 5-methyltetrahydropteroyltriglutamate--homocysteine methyltransferase.